Consider the following 372-residue polypeptide: 3-galactosyl-N-acetylglucosaminide 4-alpha-L-fucosyltransferase FUT3 (372 aa).

At 1–15 (MDPLGAAKTQWPWRR) the chain is on the cytoplasmic side. The helical; Signal-anchor for type II membrane protein transmembrane segment at 16-34 (CLAALLFQLLVAVCFFSYL) threads the bilayer. Residues 35–372 (RVSRDDATGS…MVRSIAAWFT (338 aa)) lie on the Lumenal side of the membrane. The tract at residues 40–68 (DATGSPRPGLMAVEPVTGAPGGSSRQDTT) is disordered. N-linked (GlcNAc...) asparagine glycosylation is found at asparagine 165 and asparagine 196.

Belongs to the glycosyltransferase 10 family. In terms of processing, glycosylated.

It is found in the golgi apparatus. It localises to the golgi stack membrane. The enzyme catalyses a beta-D-galactosyl-(1-&gt;3)-N-acetyl-beta-D-glucosaminyl derivative + GDP-beta-L-fucose = a beta-D-galactosyl-(1-&gt;3)-[alpha-L-fucosyl-(1-&gt;4)]-N-acetyl-beta-D-glucosaminyl derivative + GDP + H(+). It catalyses the reaction an N-acetyl-alpha-neuraminyl-(2-&gt;3)-beta-D-galactosyl-(1-&gt;4)-N-acetyl-beta-D-glucosaminyl derivative + GDP-beta-L-fucose = an alpha-Neu5Ac-(2-&gt;3)-beta-D-Gal-(1-&gt;4)-[alpha-L-Fuc-(1-&gt;3)]-beta-D-GlcNAc derivative + GDP + H(+). The catalysed reaction is a beta-D-galactosyl-(1-&gt;4)-N-acetyl-beta-D-glucosaminyl derivative + GDP-beta-L-fucose = a beta-D-galactosyl-(1-&gt;4)-[alpha-L-fucosyl-(1-&gt;3)]-N-acetyl-beta-D-glucosaminyl derivative + GDP + H(+). It carries out the reaction an alpha-Neu5Ac-(2-&gt;3)-beta-D-Gal-(1-&gt;4)-beta-D-GlcNAc-(1-&gt;3)-beta-D-Gal-(1-&gt;4)-[alpha-L-Fuc-(1-&gt;3)]-beta-D-GlcNAc derivative + GDP-beta-L-fucose = an alpha-Neu5Ac-(2-&gt;3)-beta-D-Gal-(1-&gt;4)-[alpha-L-Fuc-(1-&gt;3)]-beta-D-GlcNAc-(1-&gt;3)-beta-D-Gal-(1-&gt;4)-[alpha-L-Fuc-(1-&gt;3)]-beta-D-GlcNAc derivative + GDP + H(+). The enzyme catalyses Lc4Cer + GDP-beta-L-fucose = a lactoside III(4)-a-Fuc-Lc4Cer + GDP + H(+). It catalyses the reaction a beta-D-Gal-(1-&gt;3)-beta-D-GlcNAc-(1-&gt;3)-beta-D-Gal-(1-&gt;4)-beta-D-Glc-(1&lt;-&gt;1')-Cer(d18:1(4E)) + GDP-beta-L-fucose = a III(4)-a-Fuc-Lc4Cer(d18:1(4E)) + GDP + H(+). The catalysed reaction is N-acetyl-alpha-neuraminosyl-(2-&gt;3)-beta-D-galactosyl-(1-&gt;3)-[N-acetyl-alpha-neuraminosyl-(2-&gt;6)]-N-acetyl-beta-D-glucosaminyl-(1-&gt;3)-beta-D-galactosyl-(1-&gt;4)-beta-D-glucosyl-(1&lt;-&gt;1')-N-acyl-sphing-4-enine + GDP-beta-L-fucose = N-acetyl-alpha-neuraminosyl-(2-&gt;3)-beta-D-galactosyl-(1-&gt;3)-alpha-L-fucosyl-(1-&gt;4)-[N-acetyl-alpha-neuraminosyl-(2-&gt;6)-N-acetyl-beta-D-glucosaminyl-(1-&gt;3)]-beta-D-galactosyl-(1-&gt;4)-beta-D-glucosyl-(1&lt;-&gt;1')-N-acyl-sphing-4-enine + GDP + H(+). It carries out the reaction N-acetyl-alpha-neuraminosyl-(2-&gt;3)-beta-D-galactosyl-(1-&gt;3)-N-acetyl-beta-D-glucosaminyl-(1-&gt;3)-beta-D-galactosyl-(1-&gt;4)-beta-D-glucosyl-(1&lt;-&gt;1')-N-acyl-sphing-4-enine + GDP-beta-L-fucose = N-acetyl-alpha-neuraminosyl-(2-&gt;3)-beta-D-galactosyl-(1-&gt;3)-alpha-L-fucosyl-(1-&gt;4)-[N-acetyl-beta-D-glucosaminyl-(1-&gt;3)]-beta-D-galactosyl-(1-&gt;4)-beta-D-glucosyl-(1&lt;-&gt;1')-N-acyl-sphing-4-enine + GDP + H(+). The enzyme catalyses beta-D-galactosyl-(1-&gt;3)-N-acetyl-D-glucosamine + GDP-beta-L-fucose = beta-D-galactosyl-(1-&gt;3)-[alpha-L-fucosyl-(1-&gt;4)]-N-acetyl-D-glucosamine + GDP + H(+). It catalyses the reaction alpha-L-Fuc-(1-&gt;2)-beta-D-Gal-(1-&gt;3)-D-GlcNAc + GDP-beta-L-fucose = alpha-L-Fuc-(1-&gt;2)-beta-D-Gal-(1-&gt;3)-[alpha-L-Fuc-(1-&gt;4)]-D-GlcNAc + GDP + H(+). The catalysed reaction is alpha-L-Fuc-(1-&gt;2)-beta-D-Gal-(1-&gt;4)-D-GlcNAc + GDP-beta-L-fucose = alpha-L-Fuc-(1-&gt;2)-beta-D-Gal-(1-&gt;4)-[alpha-L-Fuc-(1-&gt;3)]-D-GlcNAc + GDP + H(+). It carries out the reaction beta-D-galactosyl-(1-&gt;4)-N-acetyl-D-glucosamine + GDP-beta-L-fucose = beta-D-galactosyl-(1-&gt;4)-[alpha-L-fucosyl-(1-&gt;3)]-N-acetyl-D-glucosamine + GDP + H(+). The enzyme catalyses lactose + GDP-beta-L-fucose = beta-D-galactosyl-(1-&gt;4)-[alpha-L-fucosyl-(1-&gt;3)]-D-glucose + GDP + H(+). It catalyses the reaction an alpha-Neu5Ac-(2-&gt;3)-beta-D-Gal-(1-&gt;3)-D-GlcNAc derivative + GDP-beta-L-fucose = an alpha-Neu5Ac-(2-&gt;3)-beta-D-Gal-(1-&gt;3)-[alpha-L-Fuc-(1-&gt;4)]-beta-D-GlcNAc derivative + GDP + H(+). It functions in the pathway protein modification; protein glycosylation. Functionally, catalyzes the transfer of L-fucose, from a guanosine diphosphate-beta-L-fucose, to both the subterminal N-acetyl glucosamine (GlcNAc) of type 1 chain (beta-D-Gal-(1-&gt;3)-beta-D-GlcNAc) glycolipids and oligosaccharides via an alpha(1,4) linkage, and the subterminal glucose (Glc) or GlcNAc of type 2 chain (beta-D-Gal-(1-&gt;4)-beta-D-GlcNAc) oligosaccharides via an alpha(1,3) linkage, independently of the presence of terminal alpha-L-fucosyl-(1,2) moieties on the terminal galactose of these acceptors and participates in the blood groups Lewis determination and expression of Lewis a (Le(a)), lewis b (Le(b)), Lewis x/SSEA-1 (Le(x)) and lewis y (Le(y)) antigens. Also catalyzes the transfer of L-fucose to subterminal GlcNAc of sialyl- and disialyl-lactotetraosylceramide to produce sialyl Lewis a (sLe(a)) and disialyl Lewis a via an alpha(1,4) linkage and therefore may regulate cell surface sialyl Lewis a expression and consequently regulates adhesive properties to E-selectin, cell proliferation and migration. Catalyzes the transfer of an L-fucose to 3'-sialyl-N-acetyllactosamine by an alpha(1,3) linkage, which allows the formation of sialyl-Lewis x structure and therefore may regulate the sialyl-Lewis x surface antigen expression and consequently adhesive properties to E-selectin. Prefers type 1 chain over type 2 acceptors. Type 1 tetrasaccharide is a better acceptor than type 1 disaccharide suggesting that a beta anomeric configuration of GlcNAc in the substrate is preferred. Lewis-positive (Le(+)) individuals have an active enzyme while Lewis-negative (Le(-)) individuals have an inactive enzyme. This chain is 3-galactosyl-N-acetylglucosaminide 4-alpha-L-fucosyltransferase FUT3, found in Pongo pygmaeus (Bornean orangutan).